A 274-amino-acid chain; its full sequence is 4-hydroxy-3-methylbut-2-enyl diphosphate reductase (274 aa).

Residue C12 participates in [4Fe-4S] cluster binding. (2E)-4-hydroxy-3-methylbut-2-enyl diphosphate is bound by residues H36 and H70. H36 and H70 together coordinate dimethylallyl diphosphate. 2 residues coordinate isopentenyl diphosphate: H36 and H70. C92 serves as a coordination point for [4Fe-4S] cluster. H120 contributes to the (2E)-4-hydroxy-3-methylbut-2-enyl diphosphate binding site. H120 is a binding site for dimethylallyl diphosphate. H120 is a binding site for isopentenyl diphosphate. Catalysis depends on E122, which acts as the Proton donor. (2E)-4-hydroxy-3-methylbut-2-enyl diphosphate is bound at residue T158. [4Fe-4S] cluster is bound at residue C186. (2E)-4-hydroxy-3-methylbut-2-enyl diphosphate is bound by residues S214, S215, N216, and S258. Residues S214, S215, N216, and S258 each contribute to the dimethylallyl diphosphate site. Isopentenyl diphosphate is bound by residues S214, S215, N216, and S258.

Belongs to the IspH family. It depends on [4Fe-4S] cluster as a cofactor.

The enzyme catalyses isopentenyl diphosphate + 2 oxidized [2Fe-2S]-[ferredoxin] + H2O = (2E)-4-hydroxy-3-methylbut-2-enyl diphosphate + 2 reduced [2Fe-2S]-[ferredoxin] + 2 H(+). The catalysed reaction is dimethylallyl diphosphate + 2 oxidized [2Fe-2S]-[ferredoxin] + H2O = (2E)-4-hydroxy-3-methylbut-2-enyl diphosphate + 2 reduced [2Fe-2S]-[ferredoxin] + 2 H(+). The protein operates within isoprenoid biosynthesis; dimethylallyl diphosphate biosynthesis; dimethylallyl diphosphate from (2E)-4-hydroxy-3-methylbutenyl diphosphate: step 1/1. It participates in isoprenoid biosynthesis; isopentenyl diphosphate biosynthesis via DXP pathway; isopentenyl diphosphate from 1-deoxy-D-xylulose 5-phosphate: step 6/6. Functionally, catalyzes the conversion of 1-hydroxy-2-methyl-2-(E)-butenyl 4-diphosphate (HMBPP) into a mixture of isopentenyl diphosphate (IPP) and dimethylallyl diphosphate (DMAPP). Acts in the terminal step of the DOXP/MEP pathway for isoprenoid precursor biosynthesis. The polypeptide is 4-hydroxy-3-methylbut-2-enyl diphosphate reductase (Helicobacter pylori (strain Shi470)).